The sequence spans 582 residues: Arginine--tRNA ligase (582 aa).

Residues 128-138 (PNLAKEMHVGH) carry the 'HIGH' region motif.

It belongs to the class-I aminoacyl-tRNA synthetase family. In terms of assembly, monomer.

It localises to the cytoplasm. The enzyme catalyses tRNA(Arg) + L-arginine + ATP = L-arginyl-tRNA(Arg) + AMP + diphosphate. The sequence is that of Arginine--tRNA ligase from Colwellia psychrerythraea (strain 34H / ATCC BAA-681) (Vibrio psychroerythus).